Reading from the N-terminus, the 452-residue chain is Phosphoglucosamine mutase (452 aa).

Ser-103 (phosphoserine intermediate) is an active-site residue. Mg(2+) is bound by residues Ser-103, Asp-243, Asp-245, and Asp-247. Ser-103 is modified (phosphoserine).

Belongs to the phosphohexose mutase family. Mg(2+) is required as a cofactor. Post-translationally, activated by phosphorylation.

It carries out the reaction alpha-D-glucosamine 1-phosphate = D-glucosamine 6-phosphate. Functionally, catalyzes the conversion of glucosamine-6-phosphate to glucosamine-1-phosphate. The sequence is that of Phosphoglucosamine mutase from Lactobacillus acidophilus (strain ATCC 700396 / NCK56 / N2 / NCFM).